Consider the following 64-residue polypeptide: Large ribosomal subunit protein bL35 (64 aa).

Belongs to the bacterial ribosomal protein bL35 family.

The chain is Large ribosomal subunit protein bL35 from Amoebophilus asiaticus (strain 5a2).